Reading from the N-terminus, the 194-residue chain is MSTASVLDDIDYDSSFEMVEEEKFEKIENTDNSENFQYVSTKGNTVKEVNINSNEKKKKEAPIQILTAMIGKWKLASSENLQEYFTLEKFPEITQMAWEHGITCYKMNGNQLHVHTDLLGKSLIPTIFEFDKPIARDDNAVSTHAEGNMMSTICKRIADGSIVWKVERLIKNGNLVVFNSRGNFRCKRVYKRVN.

It belongs to the calycin superfamily. Fatty-acid binding protein (FABP) family.

This is an uncharacterized protein from Caenorhabditis elegans.